Reading from the N-terminus, the 411-residue chain is Protein DDI1 homolog 2 (411 aa).

A Ubiquitin-like domain is found at 1 to 81; that stretch reads MLLTVFCAPR…LVLRQAERLR (81 aa). Positions 82–144 are disordered; sequence APPQPTVPGL…SGVSPQGLDN (63 aa). A compositionally biased stretch (low complexity) spans 108 to 121; the sequence is QNRNRPQQAQRPST. Residue Asp-262 is part of the active site. The short motif at 387-406 is the Ubiquitin-binding element; the sequence is DEIADRELAEAIQRSVQDSG.

Belongs to the DDI1 family. In terms of assembly, homodimer.

It is found in the cytoplasm. It localises to the cytosol. The protein localises to the chromosome. Functionally, aspartic protease that mediates the cleavage of NFE2L1/NRF1 at 'Leu-104', thereby promoting release of NFE2L1/NRF1 from the endoplasmic reticulum membrane. Ubiquitination of NFE2L1/NRF1 is a prerequisite for cleavage, suggesting that DDI2 specifically recognizes and binds ubiquitinated NFE2L1/NRF1. Seems to act as a proteasomal shuttle which links the proteasome and replication fork proteins like RTF2. Required for cellular survival following replication stress. The sequence is that of Protein DDI1 homolog 2 (ddi2) from Danio rerio (Zebrafish).